Reading from the N-terminus, the 391-residue chain is Histidinol-phosphate aminotransferase (391 aa).

Residue lysine 248 is modified to N6-(pyridoxal phosphate)lysine.

The protein belongs to the class-II pyridoxal-phosphate-dependent aminotransferase family. Histidinol-phosphate aminotransferase subfamily. In terms of assembly, homodimer. Requires pyridoxal 5'-phosphate as cofactor.

It carries out the reaction L-histidinol phosphate + 2-oxoglutarate = 3-(imidazol-4-yl)-2-oxopropyl phosphate + L-glutamate. It participates in amino-acid biosynthesis; L-histidine biosynthesis; L-histidine from 5-phospho-alpha-D-ribose 1-diphosphate: step 7/9. The sequence is that of Histidinol-phosphate aminotransferase from Shewanella oneidensis (strain ATCC 700550 / JCM 31522 / CIP 106686 / LMG 19005 / NCIMB 14063 / MR-1).